Consider the following 450-residue polypeptide: Signal recognition particle protein (450 aa).

GTP contacts are provided by residues 107–114 (GLQGSGKT), 190–194 (DTAGR), and 248–251 (TKTD).

It belongs to the GTP-binding SRP family. SRP54 subfamily. Part of the signal recognition particle protein translocation system, which is composed of SRP and FtsY. SRP is a ribonucleoprotein composed of Ffh and a 4.5S RNA molecule.

It localises to the cytoplasm. It carries out the reaction GTP + H2O = GDP + phosphate + H(+). Its function is as follows. Involved in targeting and insertion of nascent membrane proteins into the cytoplasmic membrane. Binds to the hydrophobic signal sequence of the ribosome-nascent chain (RNC) as it emerges from the ribosomes. The SRP-RNC complex is then targeted to the cytoplasmic membrane where it interacts with the SRP receptor FtsY. Interaction with FtsY leads to the transfer of the RNC complex to the Sec translocase for insertion into the membrane, the hydrolysis of GTP by both Ffh and FtsY, and the dissociation of the SRP-FtsY complex into the individual components. The sequence is that of Signal recognition particle protein from Buchnera aphidicola subsp. Baizongia pistaciae (strain Bp).